The primary structure comprises 520 residues: Dual specificity tyrosine-phosphorylation-regulated kinase 4 (520 aa).

Positions 1 to 32 are disordered; sequence MPASELKASEIPFHPSIKTQDPKAEEKSPKKQ. The Bipartite nuclear localization signal motif lies at 19–37; it reads TQDPKAEEKSPKKQKVTLT. Basic and acidic residues predominate over residues 20 to 29; sequence QDPKAEEKSP. A Protein kinase domain is found at 104-400; the sequence is YEVLETIGKG…PDQALKHAWI (297 aa). ATP is bound by residues 110 to 118, Lys133, and 183 to 186; these read IGKGSFGQV and FELL. The active-site Proton acceptor is the Asp230. Tyr264 bears the Phosphotyrosine; by autocatalysis mark. The tract at residues 404–467 is disordered; sequence RNLKPQPRPQ…KHVQHSGDQQ (64 aa). Residues 439 to 457 show a composition bias toward basic and acidic residues; sequence RKADEITKETTEKTKDSPT.

It belongs to the protein kinase superfamily. CMGC Ser/Thr protein kinase family. MNB/DYRK subfamily. Mg(2+) is required as a cofactor. Autophosphorylation on Tyr-264 in the activation loop is required for kinase activity.

Its subcellular location is the cytoplasm. The protein resides in the nucleus. The enzyme catalyses L-seryl-[protein] + ATP = O-phospho-L-seryl-[protein] + ADP + H(+). The catalysed reaction is L-threonyl-[protein] + ATP = O-phospho-L-threonyl-[protein] + ADP + H(+). It catalyses the reaction L-tyrosyl-[protein] + ATP = O-phospho-L-tyrosyl-[protein] + ADP + H(+). Its function is as follows. Possible non-essential role in spermiogenesis. This Homo sapiens (Human) protein is Dual specificity tyrosine-phosphorylation-regulated kinase 4 (DYRK4).